The following is a 265-amino-acid chain: MPPSKWDEEEEEGVSPPPVAARRRFDDEEDGDVLDSWDAADDSEVEREKAAKAAEAKAKAEAEAAANKKSKAQRIAEHKTRRKAAEDEEDDESDEDEAEKRARLRRTEKDSDLKHAEDLFGDIDLNRNRGKNKTIVVHDASGDPTQAVDLSAMPLFKPATKEQFTTLSNTLVPLLTAQSKKPQYALWLPEFAKQLAKELPSGDIKKVASALTTLSNEKMKEERAADKGSKKTKAAKTKVSLVASRSDKIETTAYDDDGLDDDDFM.

Disordered stretches follow at residues Met-1–Leu-113 and Ser-215–Thr-237. The span at Asp-27–Val-45 shows a compositional bias: acidic residues. A coiled-coil region spans residues Ser-43–Glu-95. Positions Glu-46–Ala-62 are enriched in basic and acidic residues. Acidic residues predominate over residues Glu-86–Glu-97. 2 stretches are compositionally biased toward basic and acidic residues: residues Ala-98–Leu-113 and Glu-217–Ser-229.

This sequence belongs to the eIF-3 subunit J family. As to quaternary structure, component of the eukaryotic translation initiation factor 3 (eIF-3) complex.

The protein localises to the cytoplasm. Its function is as follows. Component of the eukaryotic translation initiation factor 3 (eIF-3) complex, which is involved in protein synthesis of a specialized repertoire of mRNAs and, together with other initiation factors, stimulates binding of mRNA and methionyl-tRNAi to the 40S ribosome. The eIF-3 complex specifically targets and initiates translation of a subset of mRNAs involved in cell proliferation. The protein is Eukaryotic translation initiation factor 3 subunit J (hcr1) of Emericella nidulans (strain FGSC A4 / ATCC 38163 / CBS 112.46 / NRRL 194 / M139) (Aspergillus nidulans).